The following is a 285-amino-acid chain: 4-diphosphocytidyl-2-C-methyl-D-erythritol kinase (285 aa).

Residue Lys-9 is part of the active site. 89 to 99 (PLGAGLGGGSS) is a binding site for ATP. Residue Asp-131 is part of the active site.

The protein belongs to the GHMP kinase family. IspE subfamily.

The catalysed reaction is 4-CDP-2-C-methyl-D-erythritol + ATP = 4-CDP-2-C-methyl-D-erythritol 2-phosphate + ADP + H(+). Its pathway is isoprenoid biosynthesis; isopentenyl diphosphate biosynthesis via DXP pathway; isopentenyl diphosphate from 1-deoxy-D-xylulose 5-phosphate: step 3/6. Functionally, catalyzes the phosphorylation of the position 2 hydroxy group of 4-diphosphocytidyl-2C-methyl-D-erythritol. The polypeptide is 4-diphosphocytidyl-2-C-methyl-D-erythritol kinase (Thermodesulfovibrio yellowstonii (strain ATCC 51303 / DSM 11347 / YP87)).